Consider the following 189-residue polypeptide: Dual specificity phosphatase 21 (189 aa).

The Tyrosine-protein phosphatase domain maps to 20 to 161; the sequence is GLSQITASLF…LIHYEFKLFS (142 aa). A sufficient for mitochondrial localization region spans residues 43-128; that stretch reads SNNHITTIIN…YLMKYHNMTL (86 aa). Cys-105 functions as the Phosphocysteine intermediate in the catalytic mechanism.

It belongs to the protein-tyrosine phosphatase family. Non-receptor class dual specificity subfamily. In terms of assembly, microtubule inner protein component of sperm flagellar doublet microtubules. In terms of tissue distribution, selectively expressed in testis.

It is found in the cytoplasm. The protein resides in the nucleus. Its subcellular location is the mitochondrion inner membrane. The protein localises to the cytoskeleton. It localises to the flagellum axoneme. It carries out the reaction O-phospho-L-tyrosyl-[protein] + H2O = L-tyrosyl-[protein] + phosphate. It catalyses the reaction O-phospho-L-seryl-[protein] + H2O = L-seryl-[protein] + phosphate. The enzyme catalyses O-phospho-L-threonyl-[protein] + H2O = L-threonyl-[protein] + phosphate. Protein phosphatase component of the sperm flagellar doublet microtubules. May act as a regulator of sperm motility by mediating dephosphorylation of sperm doublet microtubule proteins. Can dephosphorylate single and diphosphorylated synthetic MAPK peptides, with preference for the phosphotyrosine and diphosphorylated forms over phosphothreonine. This is Dual specificity phosphatase 21 from Mus musculus (Mouse).